Consider the following 605-residue polypeptide: Capsid scaffolding protein (605 aa).

Catalysis depends on charge relay system residues His52, Ser120, and His139. The tract at residues 326–344 is interaction with pAP; the sequence is GEFVLIPTAYYSQLLTGQT. The tract at residues 585–605 is interaction with major capsid protein; that stretch reads IQGSTADDADMFANQMMVGRC.

This sequence belongs to the herpesviridae capsid scaffolding protein family. Homomultimer. Interacts with major capsid protein. As to quaternary structure, exists in a monomer-dimer equilibrium with the dimer being the active species. Post-translationally, capsid scaffolding protein is cleaved by assemblin after formation of the spherical procapsid. As a result, the capsid obtains its mature, icosahedral shape. Cleavages occur at two or more sites: release (R-site) and maturation (M-site).

Its subcellular location is the host cytoplasm. It is found in the host nucleus. The catalysed reaction is Cleaves -Ala-|-Ser- and -Ala-|-Ala- bonds in the scaffold protein.. In terms of biological role, acts as a scaffold protein by binding major capsid protein in the cytoplasm, inducing the nuclear localization of both proteins. Multimerizes in the nucleus such as major capsid protein forms the icosahedral T=16 capsid. Autocatalytic cleavage releases the assembly protein, and subsequently abolishes interaction with major capsid protein. Cleavages products are evicted from the capsid before or during DNA packaging. Its function is as follows. Protease that plays an essential role in virion assembly within the nucleus. Catalyzes the cleavage of the assembly protein after formation of the spherical procapsid. By that cleavage, the capsid matures and gains its icosahedral shape. The cleavage sites seem to include -Ala-Ser-, -Ala-Ala-, as well as Ala-Thr bonds. Assemblin and cleavages products are evicted from the capsid before or during DNA packaging. Plays a major role in capsid assembly. Acts as a scaffold protein by binding major capsid protein. Multimerizes in the nucleus such as major capsid protein forms the icosahedral T=16 capsid. Cleaved by assemblin after capsid completion. The cleavages products are evicted from the capsid before or during DNA packaging. This is Capsid scaffolding protein (33) from Varicella-zoster virus (strain Dumas) (HHV-3).